The chain runs to 1500 residues: DNA-directed RNA polymerase subunit beta' (1500 aa).

Residues Cys60, Cys62, Cys75, and Cys78 each coordinate Zn(2+). Positions 180 to 199 (DLGGMETAQRSTQRQIEEDY) are disordered. Mg(2+) is bound by residues Asp626, Asp628, and Asp630. Zn(2+) is bound by residues Cys1002, Cys1075, Cys1082, and Cys1085. The tract at residues 1440–1500 (EVQQAEKSAE…DSDHPDLSSL (61 aa)) is disordered. Residues 1449 to 1468 (EPTTTALPTTNGHQAPQSDT) are compositionally biased toward polar residues.

This sequence belongs to the RNA polymerase beta' chain family. In terms of assembly, the RNAP catalytic core consists of 2 alpha, 1 beta, 1 beta' and 1 omega subunit. When a sigma factor is associated with the core the holoenzyme is formed, which can initiate transcription. Requires Mg(2+) as cofactor. The cofactor is Zn(2+).

The enzyme catalyses RNA(n) + a ribonucleoside 5'-triphosphate = RNA(n+1) + diphosphate. Functionally, DNA-dependent RNA polymerase catalyzes the transcription of DNA into RNA using the four ribonucleoside triphosphates as substrates. In Chloroflexus aggregans (strain MD-66 / DSM 9485), this protein is DNA-directed RNA polymerase subunit beta'.